A 320-amino-acid polypeptide reads, in one-letter code: ATP-dependent 6-phosphofructokinase (320 aa).

G11 contributes to the ATP binding site. 21–25 (RAIAR) is a binding site for ADP. Residues 72-73 (RF) and 102-105 (GDGS) each bind ATP. A Mg(2+)-binding site is contributed by D103. Substrate is bound by residues 125-127 (TID), R162, and 169-171 (MGR). D127 acts as the Proton acceptor in catalysis. ADP is bound by residues 185 to 187 (GAD) and 213 to 215 (KDH). Substrate is bound by residues E222, R243, and 249–252 (HIQR).

The protein belongs to the phosphofructokinase type A (PFKA) family. ATP-dependent PFK group I subfamily. Prokaryotic clade 'B1' sub-subfamily. In terms of assembly, homotetramer. It depends on Mg(2+) as a cofactor.

It localises to the cytoplasm. It carries out the reaction beta-D-fructose 6-phosphate + ATP = beta-D-fructose 1,6-bisphosphate + ADP + H(+). It functions in the pathway carbohydrate degradation; glycolysis; D-glyceraldehyde 3-phosphate and glycerone phosphate from D-glucose: step 3/4. With respect to regulation, allosterically activated by ADP and other diphosphonucleosides, and allosterically inhibited by phosphoenolpyruvate. Its function is as follows. Catalyzes the phosphorylation of D-fructose 6-phosphate to fructose 1,6-bisphosphate by ATP, the first committing step of glycolysis. This is ATP-dependent 6-phosphofructokinase from Ligilactobacillus salivarius (strain UCC118) (Lactobacillus salivarius).